The primary structure comprises 411 residues: UPF0761 membrane protein PA0951 (411 aa).

Transmembrane regions (helical) follow at residues L36–F56, H92–I112, F132–V152, L174–V194, G207–F229, and I244–C264.

The protein belongs to the UPF0761 family.

The protein resides in the cell inner membrane. The protein is UPF0761 membrane protein PA0951 of Pseudomonas aeruginosa (strain ATCC 15692 / DSM 22644 / CIP 104116 / JCM 14847 / LMG 12228 / 1C / PRS 101 / PAO1).